A 380-amino-acid chain; its full sequence is Cytochrome b (380 aa).

The next 4 helical transmembrane spans lie at 34–54 (FGSL…LLAA), 78–99 (WLIR…YLHI), 114–134 (WNTG…GYVL), and 179–199 (FFAL…IHLA). 2 residues coordinate heme b: H84 and H98. 2 residues coordinate heme b: H183 and H197. H202 lines the a ubiquinone pocket. 4 helical membrane passes run 227 to 247 (LKDI…ALFS), 289 to 309 (LGGV…PLLH), 321 to 341 (LSQL…WIGS), and 348 to 368 (FIII…ILFP).

This sequence belongs to the cytochrome b family. As to quaternary structure, the cytochrome bc1 complex contains 11 subunits: 3 respiratory subunits (MT-CYB, CYC1 and UQCRFS1), 2 core proteins (UQCRC1 and UQCRC2) and 6 low-molecular weight proteins (UQCRH/QCR6, UQCRB/QCR7, UQCRQ/QCR8, UQCR10/QCR9, UQCR11/QCR10 and a cleavage product of UQCRFS1). This cytochrome bc1 complex then forms a dimer. Heme b serves as cofactor.

Its subcellular location is the mitochondrion inner membrane. Component of the ubiquinol-cytochrome c reductase complex (complex III or cytochrome b-c1 complex) that is part of the mitochondrial respiratory chain. The b-c1 complex mediates electron transfer from ubiquinol to cytochrome c. Contributes to the generation of a proton gradient across the mitochondrial membrane that is then used for ATP synthesis. This is Cytochrome b (MT-CYB) from Cyrtonyx montezumae (Montezuma quail).